We begin with the raw amino-acid sequence, 467 residues long: Mitogen-activated protein kinase kinase kinase 8 (467 aa).

Residue threonine 80 is modified to Phosphothreonine. 2 positions are modified to phosphoserine: serine 138 and serine 141. Residues 144 to 152 and lysine 167 contribute to the ATP site; that span reads VPRGAFGKV. The Protein kinase domain maps to 146 to 388; the sequence is RGAFGKVYLA…AADLLKHEAL (243 aa). Residue aspartate 253 is the Proton acceptor of the active site. Residue threonine 290 is modified to Phosphothreonine. A phosphoserine mark is found at serine 400 and serine 443.

It belongs to the protein kinase superfamily. STE Ser/Thr protein kinase family. MAP kinase kinase kinase subfamily. Forms a ternary complex with NFKB1/p105 and TNIP2. Interacts with NFKB1; the interaction increases the stability of MAP3K8 but inhibits its MEK phosphorylation activity, whereas loss of interaction following LPS stimulation leads to its degradation. Interacts with CD40 and TRAF6; the interaction is required for ERK activation. Interacts with KSR2; the interaction inhibits ERK and NF-kappa-B activation. Requires Mg(2+) as cofactor. In terms of processing, autophosphorylated. As to expression, expressed in spleen, thymus, liver and lung.

Its subcellular location is the cytoplasm. The catalysed reaction is L-seryl-[protein] + ATP = O-phospho-L-seryl-[protein] + ADP + H(+). It carries out the reaction L-threonyl-[protein] + ATP = O-phospho-L-threonyl-[protein] + ADP + H(+). In terms of biological role, required for lipopolysaccharide (LPS)-induced, TLR4-mediated activation of the MAPK/ERK pathway in macrophages, thus being critical for production of the pro-inflammatory cytokine TNF-alpha (TNF) during immune responses. Involved in the regulation of T-helper cell differentiation and IFNG expression in T-cells. Involved in mediating host resistance to bacterial infection through negative regulation of type I interferon (IFN) production. Transduces CD40 and TNFRSF1A signals that activate ERK in B-cells and macrophages, and thus may play a role in the regulation of immunoglobulin production. May also play a role in the transduction of TNF signals that activate JNK and NF-kappa-B in some cell types. In adipocytes, activates MAPK/ERK pathway in an IKBKB-dependent manner in response to IL1B and TNF, but not insulin, leading to induction of lipolysis. Plays a role in the cell cycle. This chain is Mitogen-activated protein kinase kinase kinase 8 (Map3k8), found in Rattus norvegicus (Rat).